The primary structure comprises 154 residues: CASP-like protein 5B2 (154 aa).

Topologically, residues methionine 1–arginine 17 are cytoplasmic. The chain crosses the membrane as a helical span at residues valine 18 to alanine 38. At serine 39–alanine 42 the chain is on the extracellular side. The chain crosses the membrane as a helical span at residues phenylalanine 43–leucine 63. Over aspartate 64–aspartate 87 the chain is Cytoplasmic. The helical transmembrane segment at tryptophan 88–leucine 107 threads the bilayer. Residues phenylalanine 108–threonine 130 lie on the Extracellular side of the membrane. A helical transmembrane segment spans residues alanine 131 to leucine 151. At alanine 152 to phenylalanine 154 the chain is on the cytoplasmic side.

It belongs to the Casparian strip membrane proteins (CASP) family. As to quaternary structure, homodimer and heterodimers.

The protein resides in the cell membrane. This chain is CASP-like protein 5B2, found in Zea mays (Maize).